The sequence spans 452 residues: UPF0210 protein Ccel_1722 (452 aa).

The protein belongs to the UPF0210 family. As to quaternary structure, homodimer.

The protein is UPF0210 protein Ccel_1722 of Ruminiclostridium cellulolyticum (strain ATCC 35319 / DSM 5812 / JCM 6584 / H10) (Clostridium cellulolyticum).